The sequence spans 209 residues: Thymidine kinase (209 aa).

ATP is bound by residues 25-32 (GCMFAGKT) and 103-106 (DEVQ). Catalysis depends on Glu-104, which acts as the Proton acceptor. Zn(2+)-binding residues include Cys-160, Cys-163, Cys-198, and Cys-201.

The protein belongs to the thymidine kinase family. As to quaternary structure, homotetramer.

It localises to the cytoplasm. It catalyses the reaction thymidine + ATP = dTMP + ADP + H(+). The sequence is that of Thymidine kinase from Mycoplasma mycoides subsp. mycoides SC (strain CCUG 32753 / NCTC 10114 / PG1).